The chain runs to 309 residues: Heme A synthase (309 aa).

The Cytoplasmic portion of the chain corresponds to 1–6 (MTKKLK). A helical membrane pass occupies residues 7-27 (ILSVISTICMIPLLLGGALVT). Residues 28-62 (KTGSADGCGNSWPLCEGQFLPTKISFEMFIELSHR) lie on the Extracellular side of the membrane. Residues Cys35 and Cys42 are joined by a disulfide bond. Residue Glu58 is part of the active site. His61 contacts heme o. Residues 63–83 (GVTGVVGILIVYLTYLVWKEL) form a helical membrane-spanning segment. Residues 84–88 (RHNKE) are Cytoplasmic-facing. A helical transmembrane segment spans residues 89–109 (VVFLAFSALSLMILQALIGAA). Residues 110-123 (AVVWGQSDFALATH) are Extracellular-facing. Position 123 (His123) interacts with heme o. Residues 124–144 (FGISLVCFAAVFLLMLQLFEI) traverse the membrane as a helical segment. Over 145-159 (DKKLHTEDIHINKTH) the chain is Cytoplasmic. Residues 160-180 (RIEIYAISFYTMCVVYSGALV) traverse the membrane as a helical segment. Residues 181-211 (RHTDSNLACRDWPLCVNNSSFGISDYNFYQW) lie on the Extracellular side of the membrane. Cys189 and Cys195 form a disulfide bridge. A helical transmembrane segment spans residues 212–232 (VQMGHRLAAGILFIWTVILTI). Position 216 (His216) interacts with heme b. The Cytoplasmic portion of the chain corresponds to 233–247 (RMVKHYKNSKVFYWS). The chain crosses the membrane as a helical span at residues 248–268 (WLITLGLITLQVLFGALIIFT). Residues 269 to 271 (SLN) are Extracellular-facing. A helical membrane pass occupies residues 272 to 292 (LAIALFHALFITCYFGMLSFF). Heme b is bound at residue His278. Residues 293 to 309 (MHLSFRAKRREKYSNQS) lie on the Cytoplasmic side of the membrane.

It belongs to the COX15/CtaA family. Type 1 subfamily. In terms of assembly, interacts with CtaB. The cofactor is heme b.

The protein localises to the cell membrane. It carries out the reaction Fe(II)-heme o + 2 A + H2O = Fe(II)-heme a + 2 AH2. It participates in porphyrin-containing compound metabolism; heme A biosynthesis; heme A from heme O: step 1/1. Catalyzes the conversion of heme O to heme A by two successive hydroxylations of the methyl group at C8. The first hydroxylation forms heme I, the second hydroxylation results in an unstable dihydroxymethyl group, which spontaneously dehydrates, resulting in the formyl group of heme A. This is Heme A synthase from Oceanobacillus iheyensis (strain DSM 14371 / CIP 107618 / JCM 11309 / KCTC 3954 / HTE831).